The primary structure comprises 287 residues: Aquaporin PIP2-1 (287 aa).

The residue at position 1 (Met1) is an N-acetylmethionine. At Ala2–Arg39 the chain is on the cytoplasmic side. An N6,N6-dimethyllysine; partial modification is found at Lys3. A helical transmembrane segment spans residues Ala40 to Ile60. Residues Gly61–Ile83 are Extracellular-facing. Residues Ala84 to Gly104 form a helical membrane-spanning segment. At His105 to Ala125 the chain is on the cytoplasmic side. The NPA 1 signature appears at Asn107–Ala109. The chain crosses the membrane as a helical span at residues Leu126–Phe146. The Extracellular portion of the chain corresponds to Gln147–Thr167. Residues Gly168–Ala188 form a helical membrane-spanning segment. The Cytoplasmic segment spans residues Thr189 to Pro201. A helical membrane pass occupies residues Val202 to Ile222. Residues Thr223 to Trp249 are Extracellular-facing. An NPA 2 motif is present at residues Asn228 to Ala230. Residues Ile250–Leu270 form a helical membrane-spanning segment. Residues Arg271–Val287 are Cytoplasmic-facing. Residues Ser280 and Ser283 each carry the phosphoserine modification.

It belongs to the MIP/aquaporin (TC 1.A.8) family. PIP (TC 1.A.8.11) subfamily. Ubiquitinated by RMA1, leading to proteasomal degradation. In terms of processing, the phosphorylation at Ser-280 and Ser-283 is altered by salt (NaCl) and hydrogen peroxide H(2)O(2) treatments. Phosphorylation of Ser-283 is required for plasma membrane targeting. Predominantly expressed in roots and green siliques. Also expressed at lower level above ground and in flower buds.

It localises to the cell membrane. Its function is as follows. Water channel required to facilitate the transport of water across cell membrane. Probably involved in root water uptake. Its function is impaired by Hg(2+). The chain is Aquaporin PIP2-1 (PIP2-1) from Arabidopsis thaliana (Mouse-ear cress).